An 897-amino-acid polypeptide reads, in one-letter code: Protein translocase subunit SecA (897 aa).

ATP is bound by residues Q87, 105-109, and D512; that span reads GEGKT. Positions 846 to 897 are disordered; that stretch reads EEEQQKQARKKMVFNLVDEDETSEPSKSKKLAGRNEPCPCGSGKKYKKCCGK. Residues C883, C885, C894, and C895 each contribute to the Zn(2+) site.

The protein belongs to the SecA family. Monomer and homodimer. Part of the essential Sec protein translocation apparatus which comprises SecA, SecYEG and auxiliary proteins SecDF-YajC and YidC. Requires Zn(2+) as cofactor.

It is found in the cell inner membrane. It localises to the cytoplasm. It carries out the reaction ATP + H2O + cellular proteinSide 1 = ADP + phosphate + cellular proteinSide 2.. Part of the Sec protein translocase complex. Interacts with the SecYEG preprotein conducting channel. Has a central role in coupling the hydrolysis of ATP to the transfer of proteins into and across the cell membrane, serving as an ATP-driven molecular motor driving the stepwise translocation of polypeptide chains across the membrane. The protein is Protein translocase subunit SecA of Geobacter sulfurreducens (strain ATCC 51573 / DSM 12127 / PCA).